The sequence spans 193 residues: Holliday junction branch migration complex subunit RuvA (193 aa).

Residues 1–64 (MIGRIQGTLV…EDAQQLFGFA (64 aa)) form a domain I region. Residues 65–139 (TEIEREAFRQ…GKLAPDLGIT (75 aa)) are domain II. The segment at 139–143 (TGGKP) is flexible linker. Residues 144 to 193 (QAIEATSEVLQALLSLGYSEKEALLALKQIPPETSVSDGIRMGLKYLSKP) form a domain III region.

The protein belongs to the RuvA family. In terms of assembly, homotetramer. Forms an RuvA(8)-RuvB(12)-Holliday junction (HJ) complex. HJ DNA is sandwiched between 2 RuvA tetramers; dsDNA enters through RuvA and exits via RuvB. An RuvB hexamer assembles on each DNA strand where it exits the tetramer. Each RuvB hexamer is contacted by two RuvA subunits (via domain III) on 2 adjacent RuvB subunits; this complex drives branch migration. In the full resolvosome a probable DNA-RuvA(4)-RuvB(12)-RuvC(2) complex forms which resolves the HJ.

The protein localises to the cytoplasm. The RuvA-RuvB-RuvC complex processes Holliday junction (HJ) DNA during genetic recombination and DNA repair, while the RuvA-RuvB complex plays an important role in the rescue of blocked DNA replication forks via replication fork reversal (RFR). RuvA specifically binds to HJ cruciform DNA, conferring on it an open structure. The RuvB hexamer acts as an ATP-dependent pump, pulling dsDNA into and through the RuvAB complex. HJ branch migration allows RuvC to scan DNA until it finds its consensus sequence, where it cleaves and resolves the cruciform DNA. This Polynucleobacter asymbioticus (strain DSM 18221 / CIP 109841 / QLW-P1DMWA-1) (Polynucleobacter necessarius subsp. asymbioticus) protein is Holliday junction branch migration complex subunit RuvA.